Reading from the N-terminus, the 228-residue chain is MLIQIPNVLTPEEVRYCRQRLESSNWVDGRVTAGDLAAQSKLNLQIPVDSEVAQELGEFILTALGRNASYHSAALPLRVLPPMFNRYEGGMTFGTHVDNAIRTVPGTGGMRIRADVSSTLFLTDPDEYDGGELVIKDLYGSHTVKLPAGHMVVYPASSLHAVTPVTRGARWASFFWAQSMVKDDGQRTMLYELDLTIMEVRRQLGDDKDAVLALVNHYHNLLRRWAEL.

The Fe2OG dioxygenase domain occupies 78-179 (RVLPPMFNRY…RWASFFWAQS (102 aa)). Fe cation is bound by residues His96, Asp98, and His160. Arg170 is a 2-oxoglutarate binding site.

Fe(2+) is required as a cofactor. The cofactor is L-ascorbate.

The polypeptide is PKHD-type hydroxylase Rmet_0838 (Cupriavidus metallidurans (strain ATCC 43123 / DSM 2839 / NBRC 102507 / CH34) (Ralstonia metallidurans)).